Reading from the N-terminus, the 467-residue chain is Glutamate--tRNA ligase (467 aa).

A 'HIGH' region motif is present at residues 9–19 (PSPTGYLHIGG). Residues 237–241 (KLSKR) carry the 'KMSKS' region motif. ATP is bound at residue lysine 240.

The protein belongs to the class-I aminoacyl-tRNA synthetase family. Glutamate--tRNA ligase type 1 subfamily. Monomer.

Its subcellular location is the cytoplasm. The catalysed reaction is tRNA(Glu) + L-glutamate + ATP = L-glutamyl-tRNA(Glu) + AMP + diphosphate. Its function is as follows. Catalyzes the attachment of glutamate to tRNA(Glu) in a two-step reaction: glutamate is first activated by ATP to form Glu-AMP and then transferred to the acceptor end of tRNA(Glu). The chain is Glutamate--tRNA ligase from Xanthomonas campestris pv. campestris (strain B100).